We begin with the raw amino-acid sequence, 195 residues long: Shikimate kinase (195 aa).

30–35 is an ATP binding site; the sequence is GAGKTA. Residue Thr34 participates in Mg(2+) binding. Substrate is bound by residues Asp52, Arg76, and Gly98. Position 136 (Arg136) interacts with ATP. Arg155 is a binding site for substrate.

It belongs to the shikimate kinase family. As to quaternary structure, monomer. Requires Mg(2+) as cofactor.

The protein resides in the cytoplasm. It carries out the reaction shikimate + ATP = 3-phosphoshikimate + ADP + H(+). Its pathway is metabolic intermediate biosynthesis; chorismate biosynthesis; chorismate from D-erythrose 4-phosphate and phosphoenolpyruvate: step 5/7. Functionally, catalyzes the specific phosphorylation of the 3-hydroxyl group of shikimic acid using ATP as a cosubstrate. The protein is Shikimate kinase of Ruegeria pomeroyi (strain ATCC 700808 / DSM 15171 / DSS-3) (Silicibacter pomeroyi).